Reading from the N-terminus, the 1235-residue chain is Myosin-1 (1235 aa).

The segment at 1-34 is disordered; sequence MGITKRSKDKAARAERSAGGDKSSSAKPKKATFD. A compositionally biased stretch (basic and acidic residues) spans 9 to 19; that stretch reads DKAARAERSAG. Residues 41-715 enclose the Myosin motor domain; the sequence is IGVSDLTLLS…TLFALEHMRD (675 aa). 134 to 141 contributes to the ATP binding site; the sequence is GESGAGKT. Residues 405–487 are actin-binding; sequence SIGILDIYGF…PGIFSAMKDA (83 aa). IQ domains follow at residues 719-739 and 740-765; these read HNMA…RAEA and AIRI…EGHK. The TH1 domain maps to 773 to 962; it reads RRRMSILGSR…TVHTQPGEPP (190 aa). 2 disordered regions span residues 949–1076 and 1135–1235; these read YKSS…AAKP and APPV…EDDW. Over residues 982 to 1046 the composition is skewed to low complexity; the sequence is KGKLIKPGGP…PGAAATPAAA (65 aa). A compositionally biased stretch (polar residues) spans 1050 to 1062; sequence PSHTRQQSSTSTV. Residues 1063-1073 are compositionally biased toward pro residues; sequence RPPPPPPPAPA. The region spanning 1075–1134 is the SH3 domain; the sequence is KPKIMAKVLYDFAGTRENELSIKAGDMIEIVQKENNGWWLAKTPEGQAWVPAAYVEEQAP. Residues 1135-1150 show a composition bias toward pro residues; the sequence is APPVVAPRPPPPPPPA. Residues 1180–1210 are compositionally biased toward polar residues; sequence SLQNRDSGMSLNGANGSGSDASRSSTPTPSI.

Belongs to the TRAFAC class myosin-kinesin ATPase superfamily. Myosin family.

The protein resides in the cytoplasm. It is found in the cytoskeleton. It localises to the actin patch. Its function is as follows. Type-I myosin implicated in the organization of the actin cytoskeleton. Required for proper actin cytoskeleton polarization. At the cell cortex, assembles in patch-like structures together with proteins from the actin-polymerizing machinery and promotes actin assembly. Functions as actin nucleation-promoting factor (NPF) for the Arp2/3 complex. The protein is Myosin-1 (myo-1) of Neurospora crassa (strain ATCC 24698 / 74-OR23-1A / CBS 708.71 / DSM 1257 / FGSC 987).